A 382-amino-acid chain; its full sequence is UDP-N-acetylglucosamine--N-acetylmuramyl-(pentapeptide) pyrophosphoryl-undecaprenol N-acetylglucosamine transferase (382 aa).

Residues 11 to 13 (TGG), Asn124, Arg164, Ser192, and Gln314 each bind UDP-N-acetyl-alpha-D-glucosamine.

Belongs to the glycosyltransferase 28 family. MurG subfamily.

The protein localises to the cell membrane. It carries out the reaction di-trans,octa-cis-undecaprenyl diphospho-N-acetyl-alpha-D-muramoyl-L-alanyl-D-glutamyl-meso-2,6-diaminopimeloyl-D-alanyl-D-alanine + UDP-N-acetyl-alpha-D-glucosamine = di-trans,octa-cis-undecaprenyl diphospho-[N-acetyl-alpha-D-glucosaminyl-(1-&gt;4)]-N-acetyl-alpha-D-muramoyl-L-alanyl-D-glutamyl-meso-2,6-diaminopimeloyl-D-alanyl-D-alanine + UDP + H(+). The protein operates within cell wall biogenesis; peptidoglycan biosynthesis. Functionally, cell wall formation. Catalyzes the transfer of a GlcNAc subunit on undecaprenyl-pyrophosphoryl-MurNAc-pentapeptide (lipid intermediate I) to form undecaprenyl-pyrophosphoryl-MurNAc-(pentapeptide)GlcNAc (lipid intermediate II). The sequence is that of UDP-N-acetylglucosamine--N-acetylmuramyl-(pentapeptide) pyrophosphoryl-undecaprenol N-acetylglucosamine transferase from Deinococcus deserti (strain DSM 17065 / CIP 109153 / LMG 22923 / VCD115).